The following is a 274-amino-acid chain: WIMGHMVNAIEQVDEFLNLGANAIEFDIDLDKGGIAQITHHGIPCDCGRKCTKKAIFTEYLDNIRQVTTPDDPKFREQLVLLALDLKLQRISSAKAYRAGEDVAKKLLDHYWQRGNSRARAYILLNIPLVEDYEFIRAFKDTLKNEGYESYNDKVGINFTGNEDLDKICDVLEILGFHKQVWQADGITSCFARGTERLKEALEKRDTPGYNYINKVYAWTLVRKSIMRRTLRLGVDGVMSNNPDRVIKVLKEKEFADKFRLATYNDNPWEKFRG.

His5 is an active-site residue. Mg(2+)-binding residues include Glu25 and Asp27. His41 acts as the Nucleophile in catalysis. 2 disulfide bridges follow: Cys45–Cys51 and Cys47–Cys190. Asp85 serves as a coordination point for Mg(2+).

The protein belongs to the arthropod phospholipase D family. Class II subfamily. It depends on Mg(2+) as a cofactor. In terms of tissue distribution, expressed by the venom gland.

Its subcellular location is the secreted. The enzyme catalyses an N-(acyl)-sphingosylphosphocholine = an N-(acyl)-sphingosyl-1,3-cyclic phosphate + choline. The catalysed reaction is an N-(acyl)-sphingosylphosphoethanolamine = an N-(acyl)-sphingosyl-1,3-cyclic phosphate + ethanolamine. It catalyses the reaction a 1-acyl-sn-glycero-3-phosphocholine = a 1-acyl-sn-glycero-2,3-cyclic phosphate + choline. It carries out the reaction a 1-acyl-sn-glycero-3-phosphoethanolamine = a 1-acyl-sn-glycero-2,3-cyclic phosphate + ethanolamine. Its function is as follows. Dermonecrotic toxins cleave the phosphodiester linkage between the phosphate and headgroup of certain phospholipids (sphingolipid and lysolipid substrates), forming an alcohol (often choline) and a cyclic phosphate. This toxin acts on sphingomyelin (SM). It may also act on ceramide phosphoethanolamine (CPE), lysophosphatidylcholine (LPC) and lysophosphatidylethanolamine (LPE), but not on lysophosphatidylserine (LPS), and lysophosphatidylglycerol (LPG). It acts by transphosphatidylation, releasing exclusively cyclic phosphate products as second products. Induces dermonecrosis, hemolysis, increased vascular permeability, edema, inflammatory response, and platelet aggregation. This is Dermonecrotic toxin SdSicTox-betaIIB1biv from Sicarius cf. damarensis (strain GJB-2008) (Six-eyed sand spider).